A 98-amino-acid polypeptide reads, in one-letter code: Small ribosomal subunit protein uS17 (98 aa).

It belongs to the universal ribosomal protein uS17 family. In terms of assembly, part of the 30S ribosomal subunit.

Functionally, one of the primary rRNA binding proteins, it binds specifically to the 5'-end of 16S ribosomal RNA. The protein is Small ribosomal subunit protein uS17 of Leptothrix cholodnii (strain ATCC 51168 / LMG 8142 / SP-6) (Leptothrix discophora (strain SP-6)).